The primary structure comprises 509 residues: ATP synthase subunit alpha (509 aa).

169 to 176 (GDRQTGKT) serves as a coordination point for ATP.

This sequence belongs to the ATPase alpha/beta chains family. F-type ATPases have 2 components, CF(1) - the catalytic core - and CF(0) - the membrane proton channel. CF(1) has five subunits: alpha(3), beta(3), gamma(1), delta(1), epsilon(1). CF(0) has three main subunits: a(1), b(2) and c(9-12). The alpha and beta chains form an alternating ring which encloses part of the gamma chain. CF(1) is attached to CF(0) by a central stalk formed by the gamma and epsilon chains, while a peripheral stalk is formed by the delta and b chains.

The protein localises to the cell inner membrane. It catalyses the reaction ATP + H2O + 4 H(+)(in) = ADP + phosphate + 5 H(+)(out). Functionally, produces ATP from ADP in the presence of a proton gradient across the membrane. The alpha chain is a regulatory subunit. This is ATP synthase subunit alpha from Paramagnetospirillum magneticum (strain ATCC 700264 / AMB-1) (Magnetospirillum magneticum).